The chain runs to 210 residues: MPSLLIIVLIIHVVTYLINTIGANTIDSLLWLLYLKLPNQTSQTANEQRRLKREVMQLKREMNATSSQDEFAKWAKLRRRHDKTMEEYEAKNKALGKHKSSFDLAVKSIRFFSTTGLKLFLQFWCSKTPIFELPRGWIPWQVEWVLSFPRAPLGTVSIQIWGGVCATVVSLAGDAIGVVNVYLTSKAPKQKEPATSGENSARPMAIKKEL.

At methionine 1 to leucine 4 the chain is on the lumenal side. A helical transmembrane segment spans residues leucine 5–asparagine 24. Over threonine 25–arginine 110 the chain is Cytoplasmic. A coiled-coil region spans residues asparagine 39–leucine 95. A helical membrane pass occupies residues phenylalanine 111 to phenylalanine 131. The Lumenal segment spans residues glutamate 132–threonine 155. Residues valine 156 to alanine 172 form a helical membrane-spanning segment. The Cytoplasmic portion of the chain corresponds to glycine 173–leucine 210. The segment at lysine 189–leucine 210 is disordered.

It belongs to the WRB/GET1 family. Interacts with GET3.

It is found in the endoplasmic reticulum membrane. Required for the post-translational delivery of tail-anchored (TA) proteins to the endoplasmic reticulum. Acts as a membrane receptor for soluble GET3, which recognizes and selectively binds the transmembrane domain of TA proteins in the cytosol. This chain is Protein GET1, found in Coccidioides immitis (strain RS) (Valley fever fungus).